The sequence spans 833 residues: Leucine--tRNA ligase (833 aa).

The short motif at 41–52 (PYPSGAGLHVGH) is the 'HIGH' region element. The 'KMSKS' region motif lies at 610-614 (KMSKS). An ATP-binding site is contributed by lysine 613.

This sequence belongs to the class-I aminoacyl-tRNA synthetase family.

Its subcellular location is the cytoplasm. It carries out the reaction tRNA(Leu) + L-leucine + ATP = L-leucyl-tRNA(Leu) + AMP + diphosphate. This Streptococcus pneumoniae (strain CGSP14) protein is Leucine--tRNA ligase.